Reading from the N-terminus, the 384-residue chain is Dual-specificity RNA methyltransferase RlmN (384 aa).

E105 functions as the Proton acceptor in the catalytic mechanism. The 240-residue stretch at 111 to 350 (EDDRATLCVS…TIVRKTRGDD (240 aa)) folds into the Radical SAM core domain. Residues C118 and C355 are joined by a disulfide bond. [4Fe-4S] cluster is bound by residues C125, C129, and C132. Residues 179–180 (GE), S211, 233–235 (SLH), and N312 each bind S-adenosyl-L-methionine. C355 functions as the S-methylcysteine intermediate in the catalytic mechanism.

Belongs to the radical SAM superfamily. RlmN family. [4Fe-4S] cluster is required as a cofactor.

The protein resides in the cytoplasm. The enzyme catalyses adenosine(2503) in 23S rRNA + 2 reduced [2Fe-2S]-[ferredoxin] + 2 S-adenosyl-L-methionine = 2-methyladenosine(2503) in 23S rRNA + 5'-deoxyadenosine + L-methionine + 2 oxidized [2Fe-2S]-[ferredoxin] + S-adenosyl-L-homocysteine. The catalysed reaction is adenosine(37) in tRNA + 2 reduced [2Fe-2S]-[ferredoxin] + 2 S-adenosyl-L-methionine = 2-methyladenosine(37) in tRNA + 5'-deoxyadenosine + L-methionine + 2 oxidized [2Fe-2S]-[ferredoxin] + S-adenosyl-L-homocysteine. Functionally, specifically methylates position 2 of adenine 2503 in 23S rRNA and position 2 of adenine 37 in tRNAs. m2A2503 modification seems to play a crucial role in the proofreading step occurring at the peptidyl transferase center and thus would serve to optimize ribosomal fidelity. This Escherichia coli O17:K52:H18 (strain UMN026 / ExPEC) protein is Dual-specificity RNA methyltransferase RlmN.